A 227-amino-acid chain; its full sequence is 7-cyano-7-deazaguanine synthase (227 aa).

ATP is bound at residue 8-18 (FSGGQDSTTCL). Residues C187, C196, C199, and C202 each contribute to the Zn(2+) site.

Belongs to the QueC family. It depends on Zn(2+) as a cofactor.

The catalysed reaction is 7-carboxy-7-deazaguanine + NH4(+) + ATP = 7-cyano-7-deazaguanine + ADP + phosphate + H2O + H(+). Its pathway is purine metabolism; 7-cyano-7-deazaguanine biosynthesis. Its function is as follows. Catalyzes the ATP-dependent conversion of 7-carboxy-7-deazaguanine (CDG) to 7-cyano-7-deazaguanine (preQ(0)). This Aliivibrio salmonicida (strain LFI1238) (Vibrio salmonicida (strain LFI1238)) protein is 7-cyano-7-deazaguanine synthase.